The chain runs to 160 residues: Transcription antitermination protein NusB (160 aa).

This sequence belongs to the NusB family.

In terms of biological role, involved in transcription antitermination. Required for transcription of ribosomal RNA (rRNA) genes. Binds specifically to the boxA antiterminator sequence of the ribosomal RNA (rrn) operons. The chain is Transcription antitermination protein NusB from Chlamydia pneumoniae (Chlamydophila pneumoniae).